The following is an 883-amino-acid chain: Coatomer subunit gamma (883 aa).

A disordered region spans residues M1–Q25. 6 HEAT repeats span residues R69–D106, R292–A329, V331–S364, S365–R401, T404–D439, and A476–A513.

This sequence belongs to the COPG family. In terms of assembly, oligomeric complex that consists of at least the alpha, beta, beta', gamma, delta, epsilon and zeta subunits. In terms of tissue distribution, expressed in ovary, testis, testis tip, young spermatocytes, germ cells and follicle cells. Up-regulated expression within centrally to posteriorly located germarial cysts and in migrating follicle cells. Widespread expression in imaginal disks including eye-antennal disk, wing disk, third leg and haltere disk.

It is found in the cytoplasm. It localises to the golgi apparatus membrane. The protein resides in the cytoplasmic vesicle. The protein localises to the COPI-coated vesicle membrane. Its subcellular location is the endoplasmic reticulum. The coatomer is a cytosolic protein complex that binds to dilysine motifs and reversibly associates with Golgi non-clathrin-coated vesicles, which further mediate biosynthetic protein transport from the ER, via the Golgi up to the trans Golgi network. Coatomer complex is required for budding from Golgi membranes, and is essential for the retrograde Golgi-to-ER transport of dilysine-tagged proteins. Required for limiting lipid storage in lipid droplets. Involved in the expansion of luminal extracellular matrices and apical membrane during tubulogenesis. Required in the tracheal epithelium for luminal protein secretion and diametric tube growth. In salivary glands, required for deposition of O-glycans and luminal extracellular matrix assembly. Required for epidermal morphogenesis and cuticle development. The sequence is that of Coatomer subunit gamma from Drosophila melanogaster (Fruit fly).